Here is a 349-residue protein sequence, read N- to C-terminus: sn-glycerol-3-phosphate import ATP-binding protein UgpC (349 aa).

Positions Ile4–Ile234 constitute an ABC transporter domain. Gly36 to Ser43 is a binding site for ATP.

This sequence belongs to the ABC transporter superfamily. sn-glycerol-3-phosphate importer (TC 3.A.1.1.3) family. In terms of assembly, the complex is composed of two ATP-binding proteins (UgpC), two transmembrane proteins (UgpA and UgpE) and a solute-binding protein (UgpB).

It is found in the cell inner membrane. The catalysed reaction is sn-glycerol 3-phosphate(out) + ATP + H2O = sn-glycerol 3-phosphate(in) + ADP + phosphate + H(+). In terms of biological role, part of the ABC transporter complex UgpBAEC involved in sn-glycerol-3-phosphate (G3P) import. Responsible for energy coupling to the transport system. This chain is sn-glycerol-3-phosphate import ATP-binding protein UgpC, found in Cereibacter sphaeroides (strain ATCC 17023 / DSM 158 / JCM 6121 / CCUG 31486 / LMG 2827 / NBRC 12203 / NCIMB 8253 / ATH 2.4.1.) (Rhodobacter sphaeroides).